An 869-amino-acid polypeptide reads, in one-letter code: H(+)/Cl(-) exchange transporter 6 (869 aa).

Residues 1-80 (MAGCRGSLCC…KKGRWYEVVK (80 aa)) are Cytoplasmic-facing. 2 helical membrane passes run 81-113 (WTVVFAIGVCTGLVGLFVDFFVQLFTQLKFGVV) and 128-150 (LSLLELLGFNLTFVFLASLLVLI). The Selectivity filter part_1 signature appears at 156–160 (GSGIP). S157 contacts chloride. Positions 159-166 (IPEIKCYL) form an intramembrane region, helical. Helical transmembrane passes span 176–194 (RLRTLLCKVFGVLFSVAGG) and 200–217 (EGPMIHSGAVVGAGLPQF). A Selectivity filter part_2 motif is present at residues 198-202 (GKEGP). 2 intramembrane regions (helical) span residues 241 to 253 (FVSAGAAAGIAAA) and 257 to 265 (PIGATLFSL). 3 consecutive transmembrane segments (helical) span residues 277–294 (TWKVLFCSMSATFTLNFF), 335–364 (GFFVVMGVIGGLLGATFNCLNKRLAKYRMR), and 371–392 (KLVRVLESLLVSLVTTLVVFVA). Residues N410, N422, and N432 are each glycosylated (N-linked (GlcNAc...) asparagine). Transmembrane regions (helical) follow at residues 462–481 (PITLALFFVLYFLLACWTYG) and 487–511 (GLFVPSLLCGAAFGRLVANVLKSYI). Positions 487-491 (GLFVP) match the Selectivity filter part_3 motif. F489 contributes to the chloride binding site. An intramembrane region (helical) is located at residues 519–533 (GTFSLIGAAALLGGV). Positions 534–536 (VRM) form an intramembrane region, note=Loop between two helices. An intramembrane region (helical) is located at residues 537–548 (TISLTVILIEST). Positions 549–552 (NEIT) form an intramembrane region, note=Loop between two helices. Residues 553-571 (YGLPIMITLMVAKWTGDFF) form a helical membrane-spanning segment. Over 572–869 (NKGIYDIHVG…ARLRQHYQTI (298 aa)) the chain is Cytoplasmic. Y576 provides a ligand contact to chloride. The CBS 1 domain occupies 605–662 (MEPNLTYVYPHTRIQSLVSILRTTVHHAFPVVTENRGNEKEFMKGNQLISNNIKFKKS). An ATP-binding site is contributed by 630–632 (HHA). The segment at 668–687 (AGEQRRRSQSMKSYPSSELR) is disordered. Over residues 677–686 (SMKSYPSSEL) the composition is skewed to polar residues. S773 carries the phosphoserine modification. The region spanning 807–868 (MNPSPFTVSP…QARLRQHYQT (62 aa)) is the CBS 2 domain. An ATP-binding site is contributed by 849–852 (TRHN).

The protein belongs to the chloride channel (TC 2.A.49) family. ClC-6/CLCN6 subfamily. N-glycosylated on several asparagine residues.

It localises to the late endosome membrane. The catalysed reaction is 2 chloride(in) + H(+)(out) = 2 chloride(out) + H(+)(in). Its function is as follows. Voltage-gated channel mediating the exchange of chloride ions against protons. Functions as antiporter and contributes to the acidification of the late endosome lumen. The CLC channel family contains both chloride channels and proton-coupled anion transporters that exchange chloride or another anion for protons. The presence of conserved gating glutamate residues is typical for family members that function as antiporters. The sequence is that of H(+)/Cl(-) exchange transporter 6 (CLCN6) from Oryctolagus cuniculus (Rabbit).